We begin with the raw amino-acid sequence, 629 residues long: mRNA cleavage and polyadenylation factor CLP1 (629 aa).

2 residues coordinate ATP: Glu21 and Lys72. A disordered region spans residues 142 to 166 (YIAPRTTDPNTETESDPSGTAAATV). Polar residues predominate over residues 148–159 (TDPNTETESDPS). Residue 183–188 (SAGKTS) coordinates ATP. Residues 562–582 (PPRGGGGAGQPDSSTNPTDDE) are disordered.

The protein belongs to the Clp1 family. Clp1 subfamily. In terms of assembly, component of a pre-mRNA cleavage factor complex. Interacts directly with PCF11.

The protein resides in the nucleus. In terms of biological role, required for endonucleolytic cleavage during polyadenylation-dependent pre-mRNA 3'-end formation. The chain is mRNA cleavage and polyadenylation factor CLP1 from Mycosarcoma maydis (Corn smut fungus).